The chain runs to 218 residues: Ribonuclease HII (218 aa).

Residues 23-216 enclose the RNase H type-2 domain; it reads RFLCGVDEAG…VREAIARGLV (194 aa). The a divalent metal cation site is built by Asp-29, Glu-30, and Asp-125.

Belongs to the RNase HII family. The cofactor is Mn(2+). Requires Mg(2+) as cofactor.

The protein resides in the cytoplasm. The enzyme catalyses Endonucleolytic cleavage to 5'-phosphomonoester.. Functionally, endonuclease that specifically degrades the RNA of RNA-DNA hybrids. In Cupriavidus pinatubonensis (strain JMP 134 / LMG 1197) (Cupriavidus necator (strain JMP 134)), this protein is Ribonuclease HII.